A 500-amino-acid polypeptide reads, in one-letter code: Aspartyl/glutamyl-tRNA(Asn/Gln) amidotransferase subunit B (500 aa).

This sequence belongs to the GatB/GatE family. GatB subfamily. As to quaternary structure, heterotrimer of A, B and C subunits.

The catalysed reaction is L-glutamyl-tRNA(Gln) + L-glutamine + ATP + H2O = L-glutaminyl-tRNA(Gln) + L-glutamate + ADP + phosphate + H(+). It catalyses the reaction L-aspartyl-tRNA(Asn) + L-glutamine + ATP + H2O = L-asparaginyl-tRNA(Asn) + L-glutamate + ADP + phosphate + 2 H(+). Functionally, allows the formation of correctly charged Asn-tRNA(Asn) or Gln-tRNA(Gln) through the transamidation of misacylated Asp-tRNA(Asn) or Glu-tRNA(Gln) in organisms which lack either or both of asparaginyl-tRNA or glutaminyl-tRNA synthetases. The reaction takes place in the presence of glutamine and ATP through an activated phospho-Asp-tRNA(Asn) or phospho-Glu-tRNA(Gln). This chain is Aspartyl/glutamyl-tRNA(Asn/Gln) amidotransferase subunit B, found in Rhizobium leguminosarum bv. trifolii (strain WSM2304).